The primary structure comprises 297 residues: Coatomer subunit epsilon-2 (297 aa).

The protein belongs to the COPE family. As to quaternary structure, oligomeric complex that consists of at least the alpha, beta, beta', gamma, delta, epsilon and zeta subunits.

It is found in the cytoplasm. It localises to the golgi apparatus membrane. Its subcellular location is the cytoplasmic vesicle. The protein localises to the COPI-coated vesicle membrane. Functionally, the coatomer is a cytosolic protein complex that binds to dilysine motifs and reversibly associates with Golgi non-clathrin-coated vesicles, which further mediate biosynthetic protein transport from the ER, via the Golgi up to the trans Golgi network. The coatomer complex is required for budding from Golgi membranes, and is essential for the retrograde Golgi-to-ER transport of dilysine-tagged proteins. The sequence is that of Coatomer subunit epsilon-2 from Oryza sativa subsp. japonica (Rice).